We begin with the raw amino-acid sequence, 329 residues long: Flotillin-like protein FloA (329 aa).

The chain crosses the membrane as a helical span at residues 4 to 24; that stretch reads IWGFLILILVLIFLGVFFSFV.

It belongs to the flotillin-like FloA family. In terms of assembly, homooligomerizes.

It localises to the cell membrane. It is found in the membrane raft. Functionally, found in functional membrane microdomains (FMM) that may be equivalent to eukaryotic membrane rafts. FMMs are highly dynamic and increase in number as cells age. Flotillins are thought to be important factors in membrane fluidity. This Dictyoglomus turgidum (strain DSM 6724 / Z-1310) protein is Flotillin-like protein FloA.